The primary structure comprises 732 residues: MSEPMSERERWQLELDKLQRGLQGDPFAFLGPQRDPGGEGGVLRAYLPGAQRVELLDEDGATLAELEQSDPGSGLFQRHLERLPPRYRLRVHWPDGVQESEDPYAFGPLLGELDLYLFAEGNHRQLASCLGAQLTRHEGVEGVRFAVWAPNAVRVSVVGDFNGWDGRRHPMRRRYPSGVWELFVPRLGEGELYKYELQGHDGLLPLKADPLALACETPPGTASKTCAALRHEWRDQDWLARRAERQGYAAPLSIYEVHAGSWRHRDGRPPHWSELAEELIPYVRQLGFTHIELMPVMEHPFGGSWGYQPLGLFAPTARYGTPEDFAAFVDACHQAGIGVILDWVPAHFPTDAHGLGRFDGTALYEYEHPFEGFHQDWDTYIYNLGRSEVHGFMLASALHWLRTYHVDGLRVDAVASMLYRDYSRKEGEWLPNRHGGRENLEAIDFLHHLNQVVASETPGALVIAEESTAWPGVSRPVAEGGLGFSHKWNMGWMHDSLAYIGEDPLHRRYHHHQLTFGLLYAFSEHFILPISHDEVVHGKHSLLDKMPGDRWQKFANLRLYLSFMWSHPGKKLLFMGCEFGQWREWNHDGELDWYLLRYPEHQGVQDLVAALNRLYRELPALHARDGEALGFEWLIGDDQANSVYAWLRHAAGEPSLLAVHNFTPVPRQGYRIGVPQGGDWDVLLNSDAQAFAGSGAGSQGRVSSESCGAHGQAQSLVLDLPPLGTLLLRPAG.

Residue aspartate 412 is the Nucleophile of the active site. Glutamate 465 serves as the catalytic Proton donor.

This sequence belongs to the glycosyl hydrolase 13 family. GlgB subfamily. In terms of assembly, monomer.

The catalysed reaction is Transfers a segment of a (1-&gt;4)-alpha-D-glucan chain to a primary hydroxy group in a similar glucan chain.. It functions in the pathway glycan biosynthesis; glycogen biosynthesis. Functionally, catalyzes the formation of the alpha-1,6-glucosidic linkages in glycogen by scission of a 1,4-alpha-linked oligosaccharide from growing alpha-1,4-glucan chains and the subsequent attachment of the oligosaccharide to the alpha-1,6 position. This Pseudomonas aeruginosa (strain ATCC 15692 / DSM 22644 / CIP 104116 / JCM 14847 / LMG 12228 / 1C / PRS 101 / PAO1) protein is 1,4-alpha-glucan branching enzyme GlgB.